The sequence spans 407 residues: 1-deoxy-D-xylulose 5-phosphate reductoisomerase (407 aa).

NADPH-binding residues include Thr25, Gly26, Ser27, Ile28, Asn53, and Asn136. Lys137 is a binding site for 1-deoxy-D-xylulose 5-phosphate. Position 138 (Glu138) interacts with NADPH. Asp162 contributes to the Mn(2+) binding site. 1-deoxy-D-xylulose 5-phosphate contacts are provided by Ser163, Glu164, Ser188, and His211. Residue Glu164 participates in Mn(2+) binding. Gly217 is a binding site for NADPH. Ser224, Asn229, Lys230, and Glu233 together coordinate 1-deoxy-D-xylulose 5-phosphate. A Mn(2+)-binding site is contributed by Glu233.

This sequence belongs to the DXR family. The cofactor is Mg(2+). Requires Mn(2+) as cofactor.

The enzyme catalyses 2-C-methyl-D-erythritol 4-phosphate + NADP(+) = 1-deoxy-D-xylulose 5-phosphate + NADPH + H(+). The protein operates within isoprenoid biosynthesis; isopentenyl diphosphate biosynthesis via DXP pathway; isopentenyl diphosphate from 1-deoxy-D-xylulose 5-phosphate: step 1/6. Its function is as follows. Catalyzes the NADPH-dependent rearrangement and reduction of 1-deoxy-D-xylulose-5-phosphate (DXP) to 2-C-methyl-D-erythritol 4-phosphate (MEP). The polypeptide is 1-deoxy-D-xylulose 5-phosphate reductoisomerase (Afipia carboxidovorans (strain ATCC 49405 / DSM 1227 / KCTC 32145 / OM5) (Oligotropha carboxidovorans)).